The primary structure comprises 102 residues: uncharacterized protein (102 aa).

This is an uncharacterized protein from Methanothermococcus thermolithotrophicus (Methanococcus thermolithotrophicus).